Reading from the N-terminus, the 250-residue chain is PF03932 family protein CutC (250 aa).

The protein belongs to the CutC family.

The protein resides in the cytoplasm. This chain is PF03932 family protein CutC, found in Proteus mirabilis (strain HI4320).